The sequence spans 1030 residues: MAAAAAVEAAAPMGALWGLVHDFVVGQQEGPADQVAADVKSGNYTVLQVVEALGSSLENPEPRTRARAIQLLSQVLLHCHTLLLEKEVVHLILFYENRLKDHHLVIPSVLQGLKALSLCVALPPGLAVSVLKAIFQEVHVQSLPQVDRHTVYNIITNFMRTREEELKSLGADFTFGFIQVMDGEKDPRNLLVAFRIVHDLISRDYSLGPFVEELFEVTSCYFPIDFTPPPNDPHGIQREDLILSLRAVLASTPRFAEFLLPLLIEKVDSEVLSAKLDSLQTLNACCAVYGQKELKDFLPSLWASIRREVFQTASERVEAEGLAALHSLTACLSRSVLRADAEDLLDSFLSNILQDCRHHLCEPDMKLVWPSAKLLQAAAGASARACDSVTSNVLPLLLEQFHKHSQSSQRRTILEMLLGFLKLQQKWSYEDKDQRPLNGFKDQLCSLVFMALTDPSTQLQLVGIRTLTVLGAQPDLLSYEDLELAVGHLYRLSFLKEDSQSCRVAALEASGTLAALYPVAFSSHLVPKLAEELRVGESNLTNGDEPTQCSRHLCCLQALSAVSTHPSIVKETLPLLLQHLWQVNRGNMVAQSSDVIAVCQSLRQMAEKCQQDPESCWYFHQTAIPCLLALAVQASMPEKEPSVLRKVLLEDEVLAAMVSVIGTATTHLSPELAAQSVTHIVPLFLDGNVSFLPENSFPSRFQPFQDGSSGQRRLIALLMAFVCSLPRNVEIPQLNQLMRELLELSCCHSCPFSSTAAAKCFAGLLNKHPAGQQLDEFLQLAVDKVEAGLGSGPCRSQAFTLLLWVTKALVLRYHPLSSCLTARLMGLLSDPELGPAAADGFSLLMSDCTDVLTRAGHAEVRIMFRQRFFTDNVPALVQGFHAAPQDVKPNYLKGLSHVLNRLPKPVLLPELPTLLSLLLEALSCPDCVVQLSTLSCLQPLLLEAPQVMSLHVDTLVTKFLNLSSSPSMAVRIAALQCMHALTRLPTPVLLPYKPQVIRALAKPLDDKKRLVRKEAVSARGEWFLLGSPGS.

Ala-2 bears the N-acetylalanine mark. Lys-496 carries the N6-acetyllysine modification. HEAT repeat units lie at residues 866 to 904, 908 to 946, 949 to 987, and 990 to 1028; these read QRFFTDNVPALVQGFHAAPQDVKPNYLKGLSHVLNRLPK, LPELPTLLSLLLEALSCPDCVVQLSTLSCLQPLLLEAPQ, SLHVDTLVTKFLNLSSSPSMAVRIAALQCMHALTRLPTP, and LPYKPQVIRALAKPLDDKKRLVRKEAVSARGEWFLLGSP. Position 1027 is a phosphoserine (Ser-1027).

It belongs to the MET18/MMS19 family. In terms of assembly, component of the CIA complex. In the CIA complex, interacts directly with CIAO2B and CIAO3. Component of the MMXD complex, composed of CIAO1, ERCC2, CIAO2B, MMS19 and SLC25A5. Interacts with CIAO2B; the interaction is direct. Interacts with ERCC2/XPD; the interaction is direct. Interacts with ERCC3/XPB and NCOA3/RAC3. Interacts with RTEL1; the interaction mediates the association of RTEL1 with the CIA complex. Interacts with BRIP1. Interacts with KIF4A; the interaction facilitates the transfer of Fe-S clusters to KIF4A to ensure proper localization of KIF4A to the mitotic machinery components. Interacts with CCDC117; the interaction is indirect. In terms of processing, ubiquitinated; undergoes 'Lys-48'-linked polyubiquitination by MAGEF1-NSMCE1 ubiquitin ligase complex leading to proteasomal degradation. Ubiquitously expressed with higher expression in testis.

It localises to the nucleus. It is found in the cytoplasm. Its subcellular location is the cytoskeleton. The protein resides in the spindle. The protein localises to the microtubule organizing center. It localises to the centrosome. In terms of biological role, key component of the cytosolic iron-sulfur protein assembly (CIA) complex, a multiprotein complex that mediates the incorporation of iron-sulfur cluster into apoproteins specifically involved in DNA metabolism and genomic integrity. In the CIA complex, MMS19 acts as an adapter between early-acting CIA components and a subset of cellular target iron-sulfur proteins such as ERCC2/XPD, FANCJ and RTEL1, thereby playing a key role in nucleotide excision repair (NER), homologous recombination-mediated double-strand break DNA repair, DNA replication and RNA polymerase II (POL II) transcription. As part of the mitotic spindle-associated MMXD complex, plays a role in chromosome segregation, probably by facilitating iron-sulfur (Fe-S) cluster assembly into ERCC2/XPD. Together with CIAO2, facilitates the transfer of Fe-S clusters to the motor protein KIF4A, which ensures proper localization of KIF4A to mitotic machinery components to promote the progression of mitosis. Indirectly acts as a transcriptional coactivator of estrogen receptor (ER), via its role in iron-sulfur insertion into some component of the TFIIH-machinery. In Homo sapiens (Human), this protein is MMS19 nucleotide excision repair protein homolog.